A 329-amino-acid polypeptide reads, in one-letter code: Glycerol-3-phosphate dehydrogenase [NAD(P)+] (329 aa).

NADPH contacts are provided by W15, H35, and K107. Positions 107, 135, and 137 each coordinate sn-glycerol 3-phosphate. NADPH is bound at residue A139. K190, D243, S253, R254, and N255 together coordinate sn-glycerol 3-phosphate. Catalysis depends on K190, which acts as the Proton acceptor. Residue R254 participates in NADPH binding. Residues L276 and E278 each contribute to the NADPH site.

It belongs to the NAD-dependent glycerol-3-phosphate dehydrogenase family.

Its subcellular location is the cytoplasm. It catalyses the reaction sn-glycerol 3-phosphate + NAD(+) = dihydroxyacetone phosphate + NADH + H(+). It carries out the reaction sn-glycerol 3-phosphate + NADP(+) = dihydroxyacetone phosphate + NADPH + H(+). Its pathway is membrane lipid metabolism; glycerophospholipid metabolism. Catalyzes the reduction of the glycolytic intermediate dihydroxyacetone phosphate (DHAP) to sn-glycerol 3-phosphate (G3P), the key precursor for phospholipid synthesis. This chain is Glycerol-3-phosphate dehydrogenase [NAD(P)+], found in Rhodopseudomonas palustris (strain TIE-1).